A 223-amino-acid chain; its full sequence is Deoxyribose-phosphate aldolase (223 aa).

Asp91 acts as the Proton donor/acceptor in catalysis. Lys153 serves as the catalytic Schiff-base intermediate with acetaldehyde. Lys182 (proton donor/acceptor) is an active-site residue.

The protein belongs to the DeoC/FbaB aldolase family. DeoC type 1 subfamily.

Its subcellular location is the cytoplasm. The enzyme catalyses 2-deoxy-D-ribose 5-phosphate = D-glyceraldehyde 3-phosphate + acetaldehyde. Its pathway is carbohydrate degradation; 2-deoxy-D-ribose 1-phosphate degradation; D-glyceraldehyde 3-phosphate and acetaldehyde from 2-deoxy-alpha-D-ribose 1-phosphate: step 2/2. Catalyzes a reversible aldol reaction between acetaldehyde and D-glyceraldehyde 3-phosphate to generate 2-deoxy-D-ribose 5-phosphate. This Streptococcus pyogenes serotype M12 (strain MGAS2096) protein is Deoxyribose-phosphate aldolase.